Consider the following 1960-residue polypeptide: Exophilin-5 (1960 aa).

The RabBD domain maps to 7–63 (GFDFSFLNEEEARKILQVLERNEELRRAEKDRISKLQKTKRDIRWLQGATGEWFEEI). Composition is skewed to polar residues over residues 325–334 (ASPATGSFTA), 342–366 (DTQN…LSSI), and 635–645 (SQSSSFPDSTA). 5 disordered regions span residues 325–366 (ASPA…LSSI), 616–645 (TPAS…DSTA), 672–720 (HSTD…TGLP), 734–835 (DFQN…SSNT), and 910–976 (FSRS…KGRV). Residues 673–682 (STDSLSLTDT) show a composition bias toward low complexity. Positions 692 to 707 (NSEKDMDVSVSKDEQL) are enriched in basic and acidic residues. Phosphoserine is present on residues Ser-799 and Ser-802. 2 stretches are compositionally biased toward polar residues: residues 808–835 (ESGT…SSNT) and 910–920 (FSRSLSDQDPG). Basic and acidic residues predominate over residues 921–932 (QEQREEKDKATK). Residues 933-945 (SQDNQLAVNSTDN) show a composition bias toward polar residues. Residue Ser-1027 is modified to Phosphoserine. Positions 1035-1095 (QESKGTVASV…PKATKKMTDM (61 aa)) are disordered. The span at 1062 to 1074 (GKSTSDKPSSPES) shows a compositional bias: polar residues. Ser-1083 and Ser-1117 each carry phosphoserine. Disordered regions lie at residues 1291-1375 (AQVQ…LSRE), 1389-1493 (PLLH…DSES), and 1510-1759 (EAQP…EPHL). Positions 1318–1336 (PESKDVSQLPDRETSKSTL) are enriched in basic and acidic residues. A compositionally biased stretch (polar residues) spans 1356–1365 (KEISPSNVSK). Basic and acidic residues predominate over residues 1392 to 1403 (HQEKGAGKEHTK). Composition is skewed to polar residues over residues 1470-1493 (RETS…DSES) and 1520-1533 (SEAS…TNTA). Ser-1493 bears the Phosphoserine mark. 2 stretches are compositionally biased toward basic and acidic residues: residues 1534–1546 (EMRK…HMLT) and 1561–1571 (TNTDETKDRYS). A compositionally biased stretch (basic residues) spans 1572-1586 (GKHRLAAISKASKRI). The span at 1637–1657 (ESSQMNVDKSETLLQETTVSS) shows a compositional bias: polar residues. A phosphoserine mark is found at Ser-1724, Ser-1739, Ser-1789, and Ser-1819. Over residues 1732 to 1741 (TQKSTINSHC) the composition is skewed to polar residues. Disordered regions lie at residues 1828 to 1847 (ESES…STSS) and 1906 to 1960 (VNSP…ESEL). Positions 1939-1950 (WDTDTTTDDEYY) are enriched in acidic residues. Residues 1951–1960 (LDEKDKESEL) show a composition bias toward basic and acidic residues.

Interacts with RAB27A.

Its function is as follows. May act as Rab effector protein and play a role in vesicle trafficking. This is Exophilin-5 from Mus musculus (Mouse).